The primary structure comprises 126 residues: Profilin (126 aa).

It belongs to the profilin family. Occurs in many kinds of cells as a complex with monomeric actin in a 1:1 ratio.

It is found in the cytoplasm. Its subcellular location is the cytoskeleton. In terms of biological role, binds to actin and affects the structure of the cytoskeleton. At high concentrations, profilin prevents the polymerization of actin, whereas it enhances it at low concentrations. By binding to PIP2, it inhibits the formation of IP3 and DG. This chain is Profilin, found in Branchiostoma belcheri (Amphioxus).